The sequence spans 1969 residues: MAARSAPSCHLRLEWVYGYRGHQCRNNLYYTAAKEIVYFVAGVGVVYSPREHRQKFYRGHSDDIISLALHPERVLVATGQVGKEPYICIWDSYTVQTISVLKDVHTHGIACLAFDLDGQRLVSVGLDSKNAVCVWDWKRGKMLSMAPGHTDRIFDISWDLYQPNKLVSCGVKHIKFWSLCGNALTPKRGVFGKTGDLQTILCLACARDELTYSGALNGDIYVWKGINLIRTIQGAHAAGIFSMNACEEGFATGGRDGCIRLWDLTFKPITVIDLRETDQGYKGLSVRSVCWRGDHILVGTQDSEIFEIVVQERNKPFLIMQGHCEGELWALAVHPTKPLAVTGSDDRSVRIWSLVDHALIARCNMEEPIRCAAVNADGIHLALGMKDGSFTVLRVRDMTEVVHIKDRKEAIHELKYSPDGTYLAVGCNDSSVDIYGVAQRYKKVGECLGSLSFITHLDWSSDSRYLQTNDGNGKRLFYRMPGGKEVTSTEEIKGVHWASWTCVSGLEVNGIWPKYSDINDINSVDGNYIGQVLVTADDYGIIKLFRYPCLRKGAKFRKYIGHSAHVTNVRWSHDYQWVISIGGADHSVFQWKFIPERKLKDAVHIAPQESLADSHSDESDSDLSDVPELDSEIEQETQLTYRRQVYKEDLPQLKEQCKEKQKSATSKRRERAPGNSIRLHFVHGYRGYDCRSNLFYTQIGEIVYHVAAVGVIYNRQQNTQRFYLGHDDDILCLTIHPLKDYVATGQVGRDPSIHIWDTETIKPLSILKGHHQYGVSAVDFSADGKRLASVGIDDSHTVVLWDWKKGEKLSIARGSKDKIFVVKMNPYVPDKLITAGIKHMKFWRKAGGGLIGRKGYIGTLGKNDTMMCAVYGWTEEMAFSGTSTGDVCIWRDIFLVKTVKAHDGPVFSMHALEKGFVTGGKDGIVALWDDSFERCLKTYAIKRAALAPGSKGLLLEDNPSIRAISLGHGHILVGTKNGEILEVDKSGPITLLVQGHMEGEVWGLATHPYLPICATVSDDKTLRIWDLSPSHCMLAVRKLKKGGRCCCFSPDGKALAVGLNDGSFLMANADTLEDLVSFHHRKDMISDIRFSPGSGKYLAVASHDSFIDIYNVMSSKRVGICKGATSYITHIDWDIRGKLLQVNTGAKEQLFFEAPRGKKQTIPSVEVEKIAWASWTSVLGLCCEGIWPVIGEVTDVTASCLTSDKMVLATGDDLGFVKLFRYPTKGKFGKFKRYVAHSTHVTNVRWTYDDSMLVTLGGTDMSLMVWTNEMEGYREKRPCDSEESDIDSEEDGGYDSDVTRENEISYTIRALSTNIRPMLGIKPHLQQKEPSIDERPPVSRAPPQPEKLQTNNVGKKKRPIEDLVLELIFGYRGRDCRNNVHYLNDGDDIIYHTASVGILHNVATGSQSFYQEHNDDILCLTVNQHPKFINIVATGQVGDSADMSATAPSIHIWDAMNKQTLSILRCYHSKGVCSVSFSATGKLLLSVGLDPEHTITIWRWQEGAKIASRAGHNQRIFVAEFRPDSDTQFVSVGVKHVKFWTLAGRALLSKKGLLSTLEDARMQTMLAIAFGANNLTFTGTISGDVCVWKDHILCRIVARAHNGPVFAMYTTLRDGLIVTGGKERPSKEGGAVKLWDQELRRCRAFRLETGQATDCVRSVCRGKGKILVGTRNAEIIEVGEKNAACNILVNGHVDGPIWGLATHPSRDFFLSAAEDGTVRLWDIADKKMLNKVNLGHAARTVCYSPEGDMVAIGMKNGEFIILLVSSLKIWGKKRDRRCAIHDIRFSPDSRYLAVGSSENSVDFYDLTLGPTLNRISYCKDIPSFVIQMDFSADSSYLQVSSGCYKRHVYEVPSGKHLMDHAAIDRITWATWTSILGDEVLGIWSRHAEKADVNCACVSHSGISLVTGDDFGMVKLFDFPCPEKFAKHKRFLGHSPHVTNIRFTSGDRHVVSAGGDDCSLFVWKCVHTPH.

10 WD repeats span residues 59–100 (GHSD…TISV), 104–145 (VHTH…MLSM), 148–187 (GHTDRIFDISWDLYQPNKLVSCGVKHIKFWSLCGNALTPK), 195–233 (GDLQTILCLACARDELTYSGALNGDIYVWKGINLIRTIQ), 235–273 (AHAAGIFSMNACEEGFATGGRDGCIRLWDLTFKPITVID), 280–321 (GYKG…LIMQ), 323–362 (HCEGELWALAVHPTKPLAVTGSDDRSVRIWSLVDHALIAR), 406–445 (DRKEAIHELKYSPDGTYLAVGCNDSSVDIYGVAQRYKKVG), 449–488 (GSLSFITHLDWSSDSRYLQTNDGNGKRLFYRMPGGKEVTS), and 561–601 (GHSA…KLKD). The segment at 609 to 633 (ESLADSHSDESDSDLSDVPELDSEI) is disordered. Positions 619 to 633 (SDSDLSDVPELDSEI) are enriched in acidic residues. 9 WD repeats span residues 725 to 766 (GHDD…PLSI), 770 to 811 (HHQY…KLSI), 814 to 853 (GSKDKIFVVKMNPYVPDKLITAGIKHMKFWRKAGGGLIGR), 861 to 900 (GKNDTMMCAVYGWTEEMAFSGTSTGDVCIWRDIFLVKTVK), 901 to 940 (AHDGPVFSMHALEKGFVTGGKDGIVALWDDSFERCLKTYA), 996 to 1035 (HMEGEVWGLATHPYLPICATVSDDKTLRIWDLSPSHCMLA), 1038 to 1077 (KLKKGGRCCCFSPDGKALAVGLNDGSFLMANADTLEDLVS), 1080 to 1120 (HRKD…RVGI), and 1236 to 1276 (AHST…YREK). 2 disordered regions span residues 1274–1297 (REKRPCDSEESDIDSEEDGGYDSD) and 1326–1355 (QQKEPSIDERPPVSRAPPQPEKLQTNNVGK). Residues 1281–1294 (SEESDIDSEEDGGY) are compositionally biased toward acidic residues. Positions 1326 to 1337 (QQKEPSIDERPP) are enriched in basic and acidic residues. 10 WD repeats span residues 1412 to 1463 (EHND…TLSI), 1467 to 1508 (YHSK…KIAS), 1511 to 1550 (GHNQRIFVAEFRPDSDTQFVSVGVKHVKFWTLAGRALLSK), 1560 to 1598 (ARMQTMLAIAFGANNLTFTGTISGDVCVWKDHILCRIVA), 1600 to 1646 (AHNG…RAFR), 1691 to 1731 (GHVD…MLNK), 1733 to 1774 (NLGH…GKKR), 1775 to 1814 (DRRCAIHDIRFSPDSRYLAVGSSENSVDFYDLTLGPTLNR), 1887 to 1926 (AEKADVNCACVSHSGISLVTGDDFGMVKLFDFPCPEKFAK), and 1932 to 1969 (GHSPHVTNIRFTSGDRHVVSAGGDDCSLFVWKCVHTPH).

Belongs to the WD repeat EMAP family.

The protein localises to the cytoplasm. It is found in the cytoskeleton. Functionally, may modify the assembly dynamics of microtubules, such that microtubules are slightly longer, but more dynamic. This chain is Echinoderm microtubule-associated protein-like 5 (EML5), found in Homo sapiens (Human).